Consider the following 808-residue polypeptide: Phospholipase D alpha 1 (808 aa).

The propeptide occupies 1–30; it reads MAQISLHGTLHVTIYEVDKLHSGGGPHFFR. The C2 domain maps to 1 to 125; the sequence is MAQISLHGTL…LDGEEIDRWV (125 aa). Asp-186 provides a ligand contact to Ca(2+). The PLD phosphodiesterase 1 domain maps to 326–364; sequence TMFTHHQKIVVVDSAMPNGDSQRRRIVSFVGGLDLCDGR. Residues His-331, Lys-333, and Asp-338 contribute to the active site. His-331 serves as a coordination point for a 1,2-diacyl-sn-glycero-3-phosphate. The Ca(2+) site is built by His-370 and His-404. Residues Gln-520 and His-659 each coordinate a 1,2-diacyl-sn-glycero-3-phosphate. The PLD phosphodiesterase 2 domain maps to 654-681; it reads FMIYVHTKMMIVDDEYIIIGSANINQRS. Catalysis depends on residues His-659, Lys-661, and Asp-666. Glu-720 serves as a coordination point for Ca(2+).

It belongs to the phospholipase D family. C2-PLD subfamily. Ca(2+) serves as cofactor. In terms of tissue distribution, expression is higher in radicle than in endosperm.

Its subcellular location is the cytoplasm. It is found in the membrane. The protein localises to the vacuole. It localises to the endoplasmic reticulum. The protein resides in the plastid. Its subcellular location is the cell membrane. It catalyses the reaction a 1,2-diacyl-sn-glycero-3-phosphocholine + H2O = a 1,2-diacyl-sn-glycero-3-phosphate + choline + H(+). Hydrolyzes glycerol-phospholipids at the terminal phosphodiesteric bond. Plays an important role in various cellular processes, including phytohormone action, vesicular trafficking, secretion, cytoskeletal arrangement, meiosis, tumor promotion, pathogenesis, membrane deterioration and senescence. The sequence is that of Phospholipase D alpha 1 (PLD1) from Ricinus communis (Castor bean).